The chain runs to 413 residues: Multifunctional CCA protein (413 aa).

Positions 8 and 11 each coordinate ATP. Positions 8 and 11 each coordinate CTP. Residues Asp21 and Asp23 each coordinate Mg(2+). The ATP site is built by Arg91, Arg143, and Arg146. CTP contacts are provided by Arg91, Arg143, and Arg146. The HD domain maps to 232–333 (TGVHVMMVVD…VRLFERSDAL (102 aa)).

The protein belongs to the tRNA nucleotidyltransferase/poly(A) polymerase family. Bacterial CCA-adding enzyme type 1 subfamily. In terms of assembly, monomer. Can also form homodimers and oligomers. Mg(2+) is required as a cofactor. Requires Ni(2+) as cofactor.

The catalysed reaction is a tRNA precursor + 2 CTP + ATP = a tRNA with a 3' CCA end + 3 diphosphate. It carries out the reaction a tRNA with a 3' CCA end + 2 CTP + ATP = a tRNA with a 3' CCACCA end + 3 diphosphate. Its function is as follows. Catalyzes the addition and repair of the essential 3'-terminal CCA sequence in tRNAs without using a nucleic acid template. Adds these three nucleotides in the order of C, C, and A to the tRNA nucleotide-73, using CTP and ATP as substrates and producing inorganic pyrophosphate. tRNA 3'-terminal CCA addition is required both for tRNA processing and repair. Also involved in tRNA surveillance by mediating tandem CCA addition to generate a CCACCA at the 3' terminus of unstable tRNAs. While stable tRNAs receive only 3'-terminal CCA, unstable tRNAs are marked with CCACCA and rapidly degraded. The sequence is that of Multifunctional CCA protein from Burkholderia orbicola (strain MC0-3).